A 228-amino-acid polypeptide reads, in one-letter code: Ribulose-phosphate 3-epimerase (228 aa).

Ser9 is a binding site for substrate. Positions 34, 36, and 70 each coordinate a divalent metal cation. Asp36 acts as the Proton acceptor in catalysis. Residues His70, 146–149 (GKGG), 175–177 (DGG), and 197–198 (GT) contribute to the substrate site. Asp175 contacts a divalent metal cation. Residue Asp175 is the Proton donor of the active site.

It belongs to the ribulose-phosphate 3-epimerase family. Co(2+) is required as a cofactor. It depends on Fe(2+) as a cofactor. Requires Mn(2+) as cofactor. Zn(2+) serves as cofactor.

It carries out the reaction D-ribulose 5-phosphate = D-xylulose 5-phosphate. The protein operates within carbohydrate degradation; pentose phosphate pathway; D-xylulose 5-phosphate from D-ribulose 5-phosphate (non-oxidative stage): step 1/1. Its function is as follows. Catalyzes the reversible epimerization of D-ribulose 5-phosphate to D-xylulose 5-phosphate. The protein is Ribulose-phosphate 3-epimerase of Schizosaccharomyces pombe (strain 972 / ATCC 24843) (Fission yeast).